A 437-amino-acid polypeptide reads, in one-letter code: Trigger factor (437 aa).

Positions 165–251 constitute a PPIase FKBP-type domain; the sequence is GDLVVIDFKG…LHTIKEKEKI (87 aa).

Belongs to the FKBP-type PPIase family. Tig subfamily.

It is found in the cytoplasm. The enzyme catalyses [protein]-peptidylproline (omega=180) = [protein]-peptidylproline (omega=0). In terms of biological role, involved in protein export. Acts as a chaperone by maintaining the newly synthesized protein in an open conformation. Functions as a peptidyl-prolyl cis-trans isomerase. This is Trigger factor from Nitratiruptor sp. (strain SB155-2).